The sequence spans 448 residues: Protein chibby homolog 2 (448 aa).

Residues S41, S86, S89, S97, S124, S144, S148, and S150 each carry the phosphoserine modification. The stretch at 163-198 (AKEFVLQEENKSLREENKALREENRMLRKENKILQV) forms a coiled coil. The interval 206 to 226 (SLGREESRPPSPLPQKDSASL) is disordered. 2 positions are modified to phosphoserine: S212 and S225. Positions 242–267 (KEDSTLQLLREENRALQQLLEQKQAY) form a coiled coil. The disordered stretch occupies residues 270–321 (QTEDAAAPAEESKPAPSPHEEPCSPGLLQDQGSGLSSHFEEPRGPPAPQEDS). Basic and acidic residues predominate over residues 279–291 (EESKPAPSPHEEP). 2 positions are modified to phosphoserine: S335 and S338. Positions 356-414 (LQLLREMRQALQALLKENRLLQEENRTLQVLRAEHRGFQEENKALWENNKLKLQQKLVI) form a coiled coil.

The protein belongs to the chibby family. SPERT subfamily. As to quaternary structure, homodimer. Binds to NEK1.

In Macaca fascicularis (Crab-eating macaque), this protein is Protein chibby homolog 2 (CBY2).